A 477-amino-acid chain; its full sequence is Glutamyl-tRNA(Gln) amidotransferase subunit A (477 aa).

Active-site charge relay system residues include K71 and S146. S170 functions as the Acyl-ester intermediate in the catalytic mechanism.

Belongs to the amidase family. GatA subfamily. In terms of assembly, heterotrimer of A, B and C subunits.

It carries out the reaction L-glutamyl-tRNA(Gln) + L-glutamine + ATP + H2O = L-glutaminyl-tRNA(Gln) + L-glutamate + ADP + phosphate + H(+). Functionally, allows the formation of correctly charged Gln-tRNA(Gln) through the transamidation of misacylated Glu-tRNA(Gln) in organisms which lack glutaminyl-tRNA synthetase. The reaction takes place in the presence of glutamine and ATP through an activated gamma-phospho-Glu-tRNA(Gln). The sequence is that of Glutamyl-tRNA(Gln) amidotransferase subunit A from Halothermothrix orenii (strain H 168 / OCM 544 / DSM 9562).